The sequence spans 232 residues: Cytidylate kinase (232 aa).

11–19 (GPAGAGKST) is a binding site for ATP.

This sequence belongs to the cytidylate kinase family. Type 1 subfamily.

The protein resides in the cytoplasm. It catalyses the reaction CMP + ATP = CDP + ADP. The enzyme catalyses dCMP + ATP = dCDP + ADP. In Desulfitobacterium hafniense (strain Y51), this protein is Cytidylate kinase.